The chain runs to 103 residues: Pyrimidine/purine nucleoside phosphorylase (103 aa).

The protein belongs to the nucleoside phosphorylase PpnP family.

It catalyses the reaction a purine D-ribonucleoside + phosphate = a purine nucleobase + alpha-D-ribose 1-phosphate. The enzyme catalyses adenosine + phosphate = alpha-D-ribose 1-phosphate + adenine. The catalysed reaction is cytidine + phosphate = cytosine + alpha-D-ribose 1-phosphate. It carries out the reaction guanosine + phosphate = alpha-D-ribose 1-phosphate + guanine. It catalyses the reaction inosine + phosphate = alpha-D-ribose 1-phosphate + hypoxanthine. The enzyme catalyses thymidine + phosphate = 2-deoxy-alpha-D-ribose 1-phosphate + thymine. The catalysed reaction is uridine + phosphate = alpha-D-ribose 1-phosphate + uracil. It carries out the reaction xanthosine + phosphate = alpha-D-ribose 1-phosphate + xanthine. Its function is as follows. Catalyzes the phosphorolysis of diverse nucleosides, yielding D-ribose 1-phosphate and the respective free bases. Can use uridine, adenosine, guanosine, cytidine, thymidine, inosine and xanthosine as substrates. Also catalyzes the reverse reactions. In Methylobacillus flagellatus (strain ATCC 51484 / DSM 6875 / VKM B-1610 / KT), this protein is Pyrimidine/purine nucleoside phosphorylase.